We begin with the raw amino-acid sequence, 300 residues long: Protein MoxJ (300 aa).

The first 25 residues, 1-25 (MSLVNGRRRTAASVVALTAALTALA), serve as a signal peptide directing secretion.

It is found in the periplasm. Its function is as follows. May be involved in the assemblage of active methanol dehydrogenase and/or its cofactor PQQ in the periplasm. The sequence is that of Protein MoxJ (moxJ) from Methylorubrum extorquens (strain ATCC 14718 / DSM 1338 / JCM 2805 / NCIMB 9133 / AM1) (Methylobacterium extorquens).